Here is a 543-residue protein sequence, read N- to C-terminus: Ipecoside beta-D-glucosidase IpeGLU1 (543 aa).

Residues Q36, H140, N185–E186, Y350, E422, W471, and F487 contribute to the a beta-D-glucoside site. The Proton donor role is filled by E186. The active-site Nucleophile is E422.

It belongs to the glycosyl hydrolase 1 family. Expressed in roots.

The protein localises to the cytoplasm. It localises to the cytosol. The catalysed reaction is deacetylipecoside + H2O = deacetylipecoside aglycone + D-glucose. The enzyme catalyses deacetylisoipecoside + H2O = deacetylisoipecoside aglycone + D-glucose. It carries out the reaction 6-O-methyldeacetylipecoside + H2O = 6-O-methyldeacetylipecoside aglycone + D-glucose. It catalyses the reaction 6-O-methyldeacetylisoipecoside + H2O = 6-O-methyldeacetylisoipecoside aglycone + D-glucose. The catalysed reaction is ipecoside + H2O = ipecoside aglycone + D-glucose. The enzyme catalyses 3alpha(S)-strictosidine + H2O = strictosidine aglycone + D-glucose. It participates in alkaloid biosynthesis. With respect to regulation, inhibited by Cu(2+), Fe(2+) and Zn(2+). In terms of biological role, beta-glucosidase involved in the biosynthesis of ipecac and benzylisoquinoline monoterpenoid-isoquinoline alkaloids natural products, starting by the condensation of dopamine and secologanin, and including emetine and cephaeline, drugs used both as anti-protozoal (e.g. treatment of ameobiasis) and as emetic agents. In response to pathogen and herbivore attack, triggers the release of toxic ipecoside aglycon to trigger defense responses. Catalyzes deglucosylation both on (1S)-diastereomer and (1R)-diastereomer substrates, including ipecoside, the main alkaloidal glucoside. Also active on N-deacetylisoipecoside, 6-O-methyl-N-deacetylisoipecoside, 6-O-methyl-N-deacetylipecoside and N-deacetylipecoside. This chain is Ipecoside beta-D-glucosidase IpeGLU1, found in Carapichea ipecacuanha (Ipecac).